The sequence spans 755 residues: Transcription factor kayak, isoforms A/B/F (755 aa).

Composition is skewed to low complexity over residues 23 to 66 (FAQQ…LPTQ) and 149 to 159 (QQHYPSESQSS). Disordered regions lie at residues 23–75 (FAQQ…SQSV), 149–168 (QQHYPSESQSSASGWNPETP), 316–350 (LGQGSESEDSNASYNDTQMNEEQDTTDTSSAHTDS), and 383–440 (GSAS…KRRV). The segment covering 316 to 333 (LGQGSESEDSNASYNDTQ) has biased composition (polar residues). Composition is skewed to low complexity over residues 341-350 (TDTSSAHTDS) and 383-397 (GSASVGSSNANTSNT). Residues 418 to 481 (EQKRAVRRER…NQLEYLLATH (64 aa)) form the bZIP domain. The tract at residues 420 to 439 (KRAVRRERNKQAAARCRKRR) is basic motif. Residues 446 to 453 (LTEEVEQL) are leucine-zipper. The span at 510-531 (AGSSGSGASSHHNHNSNDSSNG) shows a compositional bias: low complexity. 2 disordered regions span residues 510–552 (AGSS…PLDL) and 716–755 (DGGTGLTPVSGPLVPNSSSTNKHPLELPTPTAEPSKLVSL). Over residues 539–549 (TLNSTGRSNSP) the composition is skewed to polar residues. At Ser548 the chain carries Phosphoserine.

This sequence belongs to the bZIP family. Fos subfamily. In terms of assembly, homodimer. Heterodimer with Jra. The kay-Jra heterodimer binds more stably to the AP-1 site than either of the two proteins alone. As to expression, early expression in the embryo is mesodermal and some of this expression is localized to a region surrounding the cephalic furrow. Later in embryonic development expression is ectodermal, corresponding to muscle attachment sites. Also observed in part of the mid- and hindgut and in the anal pad.

The protein resides in the nucleus. Its function is as follows. Developmentally regulated transcription factor AP-1 binds and recognizes the enhancer DNA sequence: 5'-TGA[CG]TCA-3'. May play a role in the function or determination of a particular subset of cells in the developing embryo. It is able to carry out its function either independently of or in conjunction with Jra. The sequence is that of Transcription factor kayak, isoforms A/B/F (kay) from Drosophila melanogaster (Fruit fly).